The following is a 463-amino-acid chain: Probable glycosyltransferase 3 (463 aa).

Over 1–24 (MAVTGGGRPAVRQQAARGKQMQRT) the chain is Cytoplasmic. Residues 25 to 47 (FNNVKITLICGFITLLVLRGTVG) form a helical; Signal-anchor for type II membrane protein membrane-spanning segment. Residues 48 to 463 (INLLTYGVGG…ALKMDAKIES (416 aa)) lie on the Lumenal side of the membrane. The interval 82–125 (EIRSDTDDDDDDEEEEPLGVDASTTTTTNSTTTTATAARRRSSN) is disordered. Acidic residues predominate over residues 87–99 (TDDDDDDEEEEPL). A compositionally biased stretch (low complexity) spans 103 to 118 (ASTTTTTNSTTTTATA). 3 N-linked (GlcNAc...) asparagine glycosylation sites follow: Asn110, Asn125, and Asn442.

The protein belongs to the glycosyltransferase 34 family.

It is found in the golgi apparatus membrane. In terms of biological role, probable glycosyltransferase that may be involved in the biosynthesis of xyloglucan. The polypeptide is Probable glycosyltransferase 3 (Oryza sativa subsp. japonica (Rice)).